Here is a 392-residue protein sequence, read N- to C-terminus: Heat-inducible transcription repressor HrcA (392 aa).

The protein belongs to the HrcA family.

Its function is as follows. Negative regulator of class I heat shock genes (grpE-dnaK-dnaJ and groELS operons). Prevents heat-shock induction of these operons. This chain is Heat-inducible transcription repressor HrcA, found in Chlamydia trachomatis serovar A (strain ATCC VR-571B / DSM 19440 / HAR-13).